We begin with the raw amino-acid sequence, 354 residues long: Protein RecA (354 aa).

67 to 74 (GPESSGKT) contacts ATP.

Belongs to the RecA family.

It localises to the cytoplasm. Its function is as follows. Can catalyze the hydrolysis of ATP in the presence of single-stranded DNA, the ATP-dependent uptake of single-stranded DNA by duplex DNA, and the ATP-dependent hybridization of homologous single-stranded DNAs. It interacts with LexA causing its activation and leading to its autocatalytic cleavage. The polypeptide is Protein RecA (Enterobacter agglomerans (Erwinia herbicola)).